Here is a 760-residue protein sequence, read N- to C-terminus: Forkhead box protein M1 (760 aa).

Disordered regions lie at residues 1–54 (MRTS…AESS) and 95–167 (GKES…SYAG). 2 stretches are compositionally biased toward low complexity: residues 43–54 (PAQASQEVAESS) and 110–124 (SSGGPSSHPSQPQAH). The segment covering 125–134 (SSRDSKRAEV) has biased composition (basic and acidic residues). Low complexity predominate over residues 140–149 (GPKPAAKGVP). Residues K199 and K323 each participate in a glycyl lysine isopeptide (Lys-Gly) (interchain with G-Cter in SUMO2) cross-link. A DNA-binding region (fork-head) is located at residues 233-325 (ERPPYSYMAM…LTLDQVFKPL (93 aa)). Residues 323 to 348 (KPLEPGSPQSPEHLESQQKRPNPELH) form a disordered region. The residue at position 329 (S329) is a Phosphoserine. Over residues 334–348 (EHLESQQKRPNPELH) the composition is skewed to basic and acidic residues. A Glycyl lysine isopeptide (Lys-Gly) (interchain with G-Cter in SUMO2) cross-link involves residue K354. S374 carries the post-translational modification Phosphoserine; by CHEK2. Residues K420 and K438 each participate in a glycyl lysine isopeptide (Lys-Gly) (interchain with G-Cter in SUMO2) cross-link. Disordered regions lie at residues 500 to 560 (SWED…PDLF), 577 to 635 (ESSE…LDFS), and 660 to 709 (PLKS…IPSL). S521 carries the phosphoserine modification. The segment covering 531-542 (VTKRREKREVSR) has biased composition (basic and acidic residues). The span at 604 to 613 (PVSSTPSKSV) shows a compositional bias: polar residues. T608 is subject to Phosphothreonine; by CDK1. T624 carries the phosphothreonine modification. Residues S727 and S736 each carry the phosphoserine; by PLK1 modification.

Phosphorylated in M (mitotic) phase. Phosphorylation by the checkpoint kinase CHEK2 in response to DNA damage increases the FOXM1 protein stability probably stimulating the transcription of genes involved in DNA repair. Phosphorylated by CDK1 in late S and G2 phases, creating docking sites for the POLO box domains of PLK1. Subsequently, PLK1 binds and phosphorylates FOXM1, leading to activation of transcriptional activity and subsequent enhanced expression of key mitotic regulators. Phosphorylated by GSK3B leading to ubiquitination and proteasomal degradation. In terms of tissue distribution, expressed in fetal heart, brain, liver, lung, kidney and limb, but only in adult thymus. Appears to be expressed only in adult organs containing proliferating/cycling cells or in response to growth factors.

The protein localises to the nucleus. Transcription factor regulating the expression of cell cycle genes essential for DNA replication and mitosis. Plays a role in the control of cell proliferation. Also plays a role in DNA break repair, participating in the DNA damage checkpoint response. Promotes transcription of PHB2. The polypeptide is Forkhead box protein M1 (Foxm1) (Mus musculus (Mouse)).